The chain runs to 217 residues: Large ribosomal subunit protein uL1 (217 aa).

The protein belongs to the universal ribosomal protein uL1 family.

The sequence is that of Large ribosomal subunit protein uL1 (RPL10A) from Eremothecium gossypii (strain ATCC 10895 / CBS 109.51 / FGSC 9923 / NRRL Y-1056) (Yeast).